We begin with the raw amino-acid sequence, 553 residues long: Probable inactive serine/threonine-protein kinase samkD (553 aa).

Residues Trp-24–Tyr-90 form the SAM domain. The Protein kinase domain maps to Tyr-134–Phe-393. ATP is bound by residues Ile-140–Ile-148 and Lys-165.

This sequence belongs to the protein kinase superfamily. Ser/Thr protein kinase family.

The chain is Probable inactive serine/threonine-protein kinase samkD (samkD) from Dictyostelium discoideum (Social amoeba).